We begin with the raw amino-acid sequence, 515 residues long: 2-isopropylmalate synthase (515 aa).

The Pyruvate carboxyltransferase domain maps to 5-268; sequence VIIFDTTLRD…VCGIDASQIV (264 aa). Positions 14, 202, 204, and 239 each coordinate Mn(2+). Residues 394–515 form a regulatory domain region; it reads HFISLSQHSE…QAKLNAQMAP (122 aa).

Belongs to the alpha-IPM synthase/homocitrate synthase family. LeuA type 1 subfamily. In terms of assembly, homodimer. The cofactor is Mn(2+).

It localises to the cytoplasm. It catalyses the reaction 3-methyl-2-oxobutanoate + acetyl-CoA + H2O = (2S)-2-isopropylmalate + CoA + H(+). Its pathway is amino-acid biosynthesis; L-leucine biosynthesis; L-leucine from 3-methyl-2-oxobutanoate: step 1/4. In terms of biological role, catalyzes the condensation of the acetyl group of acetyl-CoA with 3-methyl-2-oxobutanoate (2-ketoisovalerate) to form 3-carboxy-3-hydroxy-4-methylpentanoate (2-isopropylmalate). This is 2-isopropylmalate synthase from Polynucleobacter asymbioticus (strain DSM 18221 / CIP 109841 / QLW-P1DMWA-1) (Polynucleobacter necessarius subsp. asymbioticus).